We begin with the raw amino-acid sequence, 117 residues long: Large ribosomal subunit protein bL19 (117 aa).

This sequence belongs to the bacterial ribosomal protein bL19 family.

In terms of biological role, this protein is located at the 30S-50S ribosomal subunit interface and may play a role in the structure and function of the aminoacyl-tRNA binding site. This Alkalilimnicola ehrlichii (strain ATCC BAA-1101 / DSM 17681 / MLHE-1) protein is Large ribosomal subunit protein bL19.